We begin with the raw amino-acid sequence, 423 residues long: Lysosomal acid phosphatase (423 aa).

The signal sequence occupies residues methionine 1–alanine 30. The Lumenal portion of the chain corresponds to arginine 31–glutamate 380. Histidine 42 serves as the catalytic Nucleophile. Residues asparagine 92, asparagine 133, asparagine 167, asparagine 177, asparagine 191, and asparagine 267 are each glycosylated (N-linked (GlcNAc...) asparagine). 3 disulfides stabilise this stretch: cysteine 159–cysteine 370, cysteine 212–cysteine 310, and cysteine 345–cysteine 349. Aspartate 287 (proton donor) is an active-site residue. Asparagine 322 and asparagine 331 each carry an N-linked (GlcNAc...) asparagine glycan. The chain crosses the membrane as a helical span at residues valine 381–threonine 401. The Cytoplasmic portion of the chain corresponds to valine 402–alanine 423.

It belongs to the histidine acid phosphatase family. Post-translationally, the membrane-bound form is converted to the soluble form by sequential proteolytic processing. First, the C-terminal cytoplasmic tail is removed. Cleavage by a lysosomal protease releases the soluble form in the lysosome lumen. N-glycosylated. The intermediates formed during enzymatic deglycosylation suggest that all eight predicted N-glycosylation sites are used.

The protein resides in the lysosome membrane. Its subcellular location is the lysosome lumen. The enzyme catalyses a phosphate monoester + H2O = an alcohol + phosphate. In Homo sapiens (Human), this protein is Lysosomal acid phosphatase (ACP2).